The chain runs to 292 residues: GTP cyclohydrolase FolE2 (292 aa).

It belongs to the GTP cyclohydrolase IV family.

It catalyses the reaction GTP + H2O = 7,8-dihydroneopterin 3'-triphosphate + formate + H(+). It functions in the pathway cofactor biosynthesis; 7,8-dihydroneopterin triphosphate biosynthesis; 7,8-dihydroneopterin triphosphate from GTP: step 1/1. Its function is as follows. Converts GTP to 7,8-dihydroneopterin triphosphate. The polypeptide is GTP cyclohydrolase FolE2 (Staphylococcus epidermidis (strain ATCC 12228 / FDA PCI 1200)).